A 322-amino-acid chain; its full sequence is uncharacterized protein (322 aa).

Belongs to the glycosyltransferase 2 family.

This is an uncharacterized protein from Nostoc sp. (strain PCC 7120 / SAG 25.82 / UTEX 2576).